We begin with the raw amino-acid sequence, 638 residues long: Protein disulfide-isomerase A4 (638 aa).

A signal peptide spans 1–20; that stretch reads MKLRKAWLLVLLLALTQLLA. 2 consecutive Thioredoxin domains span residues 21–162 and 162–294; these read AASA…EVSQ and QPDW…EFLK. Residues 24 to 50 form a disordered region; the sequence is AGDAHEDTSDTENATEEEEEEDDDDLE. The segment covering 32 to 50 has biased composition (acidic residues); sequence SDTENATEEEEEEDDDDLE. Asn36 carries N-linked (GlcNAc...) asparagine glycosylation. The CXXC motif lies at 84-87; it reads CGHC. 2 cysteine pairs are disulfide-bonded: Cys84-Cys87 and Cys199-Cys202. Lys359 carries the post-translational modification N6-acetyllysine. In terms of domain architecture, Thioredoxin 3 spans 498–629; that stretch reads FKKGKLKPVI…LSKFIDEHAT (132 aa). The CXXC signature appears at 548-551; the sequence is CGHC. Cysteines 548 and 551 form a disulfide. The Prevents secretion from ER signature appears at 635–638; the sequence is KEEL.

The protein belongs to the protein disulfide isomerase family. In terms of assembly, part of a large chaperone multiprotein complex comprising DNAJB11, HSP90B1, HSPA5, HYOU, PDIA2, PDIA4, PDIA6, PPIB, SDF2L1, UGGT1 and very small amounts of ERP29, but not, or at very low levels, CALR nor CANX. Component of a complex containing at least CRELD2, MANF, MATN3 and PDIA4.

It is found in the endoplasmic reticulum lumen. It localises to the melanosome. It carries out the reaction Catalyzes the rearrangement of -S-S- bonds in proteins.. The protein is Protein disulfide-isomerase A4 (Pdia4) of Mus musculus (Mouse).